Consider the following 473-residue polypeptide: Ornithine aminotransferase, mitochondrial (473 aa).

The transit peptide at 1-32 (MAAALARRGGGGLARALARGRGMCSATAAERA) directs the protein to the mitochondrion. An N6-(pyridoxal phosphate)lysine modification is found at K293.

The protein belongs to the class-III pyridoxal-phosphate-dependent aminotransferase family. In terms of assembly, homotetramer. Pyridoxal 5'-phosphate is required as a cofactor.

It localises to the mitochondrion matrix. The enzyme catalyses a 2-oxocarboxylate + L-ornithine = L-glutamate 5-semialdehyde + an L-alpha-amino acid. It functions in the pathway amino-acid biosynthesis; L-proline biosynthesis; L-glutamate 5-semialdehyde from L-ornithine: step 1/1. Its function is as follows. Confers drought and oxidative stress tolerance mainly through enhancing ROS-scavenging capacity and Pro pre-accumulation. The protein is Ornithine aminotransferase, mitochondrial (OAT) of Oryza sativa subsp. japonica (Rice).